Reading from the N-terminus, the 121-residue chain is Ribulose bisphosphate carboxylase small subunit (121 aa).

It belongs to the RuBisCO small chain family. In terms of assembly, heterohexadecamer of 8 large and 8 small subunits.

Its function is as follows. RuBisCO catalyzes two reactions: the carboxylation of D-ribulose 1,5-bisphosphate, the primary event in carbon dioxide fixation, as well as the oxidative fragmentation of the pentose substrate. Both reactions occur simultaneously and in competition at the same active site. Although the small subunit is not catalytic it is essential for maximal activity. The chain is Ribulose bisphosphate carboxylase small subunit from Alvinoconcha hessleri symbiotic bacterium.